The primary structure comprises 1557 residues: Ras guanine nucleotide exchange factor K (1557 aa).

Residues M1 to P16 show a composition bias toward pro residues. Disordered regions lie at residues M1–V121, V146–V181, L195–L238, S283–P347, N558–S619, and T881–H937. Composition is skewed to low complexity over residues S17–N40, S52–S63, N73–V90, I102–S114, T148–T161, L195–S207, and P222–P236. Residues S283–Q310 show a composition bias toward pro residues. Coiled-coil stretches lie at residues Q310–T338 and N591–L629. Low complexity predominate over residues Q311–N333. Residues E334–G343 show a composition bias toward polar residues. Low complexity-rich tracts occupy residues N558–N610 and T881–T928. An N-terminal Ras-GEF domain is found at L1058–T1177. Positions P1254–T1303 are disordered. A compositionally biased stretch (low complexity) spans P1261 to S1291. Residues D1316–R1549 form the Ras-GEF domain.

In terms of biological role, promotes the exchange of Ras-bound GDP by GTP. This Dictyostelium discoideum (Social amoeba) protein is Ras guanine nucleotide exchange factor K (gefK).